A 164-amino-acid polypeptide reads, in one-letter code: MSTLDVQTFRDAMACVGAAVNIITTDGPAGQAGFTASAVCSVTDSPPTLLVCLNRGASVWPTFNENRTLCVNTLSAGQEPLSNLFGGKTPMADRFAAARWQTGETGCPRLEDALASFDCRISQVVSVGTHDILFCTIESITRHPAPQGLVWFDRGYHALLRPAC.

It belongs to the non-flavoprotein flavin reductase family. RutF subfamily.

It catalyses the reaction FMNH2 + NAD(+) = FMN + NADH + 2 H(+). Catalyzes the reduction of FMN to FMNH2 which is used to reduce pyrimidine by RutA via the Rut pathway. The chain is FMN reductase (NADH) RutF from Enterobacter sp. (strain 638).